The sequence spans 62 residues: Large ribosomal subunit protein bL28 (62 aa).

The protein belongs to the bacterial ribosomal protein bL28 family.

The protein is Large ribosomal subunit protein bL28 of Desulforamulus reducens (strain ATCC BAA-1160 / DSM 100696 / MI-1) (Desulfotomaculum reducens).